Here is a 74-residue protein sequence, read N- to C-terminus: ATP synthase subunit c (74 aa).

Helical transmembrane passes span 8 to 28 (FIGIGFMAIGMYGAALGVSNI) and 52 to 72 (IGAGLAEAMGLFAFVIAMLLI).

The protein belongs to the ATPase C chain family. As to quaternary structure, F-type ATPases have 2 components, F(1) - the catalytic core - and F(0) - the membrane proton channel. F(1) has five subunits: alpha(3), beta(3), gamma(1), delta(1), epsilon(1). F(0) has three main subunits: a(1), b(2) and c(10-14). The alpha and beta chains form an alternating ring which encloses part of the gamma chain. F(1) is attached to F(0) by a central stalk formed by the gamma and epsilon chains, while a peripheral stalk is formed by the delta and b chains.

It localises to the cell inner membrane. Its function is as follows. F(1)F(0) ATP synthase produces ATP from ADP in the presence of a proton or sodium gradient. F-type ATPases consist of two structural domains, F(1) containing the extramembraneous catalytic core and F(0) containing the membrane proton channel, linked together by a central stalk and a peripheral stalk. During catalysis, ATP synthesis in the catalytic domain of F(1) is coupled via a rotary mechanism of the central stalk subunits to proton translocation. Key component of the F(0) channel; it plays a direct role in translocation across the membrane. A homomeric c-ring of between 10-14 subunits forms the central stalk rotor element with the F(1) delta and epsilon subunits. The protein is ATP synthase subunit c of Rickettsia typhi (strain ATCC VR-144 / Wilmington).